Consider the following 190-residue polypeptide: Jupiter microtubule associated homolog 2 (190 aa).

At M1 the chain carries N-acetylmethionine. A disordered region spans residues 1 to 190; that stretch reads MFQVPDSEGG…PGGKSSISFY (190 aa). S30 is subject to Phosphoserine. Phosphothreonine is present on T35. The span at 35-44 shows a compositional bias: polar residues; it reads TPSSRPNRMA. 3 positions are modified to phosphoserine: S45, S69, and S97. Positions 110–129 are enriched in basic and acidic residues; it reads KPKDHVFLCEGEEPKSDLKA. Phosphoserine occurs at positions 132 and 144. Positions 139–167 are enriched in basic and acidic residues; sequence PGEKGSARKAGPAKEQEPMPTVDSHEPRL.

It belongs to the JUPITER family. As to quaternary structure, monomer. Dimer. Interacts with TPCN1. Expressed in liver, kidney, prostate, testis and uterus.

It localises to the cytoplasm. The protein resides in the nucleus. Functionally, nicotinic acid adenine dinucleotide phosphate (NAADP) binding protein required for NAADP-evoked intracellular calcium release. Confers NAADP-sensitivity to the two pore channels (TPCs) complex. Enables NAADP to activate Ca(2+) release from the endoplasmic reticulum through ryanodine receptors. Its function is as follows. (Microbial infection) Involved in the endolysosomal trafficking of human coronavirus SARS-CoV-2. This Homo sapiens (Human) protein is Jupiter microtubule associated homolog 2.